A 302-amino-acid chain; its full sequence is N-acetylmuramic acid 6-phosphate etherase (302 aa).

One can recognise an SIS domain in the interval 57–220 (IADRFRSNGR…TTGAMIRIGK (164 aa)). Residue Glu85 is the Proton donor of the active site. The active site involves Glu116.

This sequence belongs to the GCKR-like family. MurNAc-6-P etherase subfamily. Homodimer.

The catalysed reaction is N-acetyl-D-muramate 6-phosphate + H2O = N-acetyl-D-glucosamine 6-phosphate + (R)-lactate. The protein operates within amino-sugar metabolism; N-acetylmuramate degradation. In terms of biological role, specifically catalyzes the cleavage of the D-lactyl ether substituent of MurNAc 6-phosphate, producing GlcNAc 6-phosphate and D-lactate. The polypeptide is N-acetylmuramic acid 6-phosphate etherase (Rhodopirellula baltica (strain DSM 10527 / NCIMB 13988 / SH1)).